The sequence spans 382 residues: MAP kinase-activated protein kinase 3 (382 aa).

Met1 bears the N-acetylmethionine mark. The segment at 1–34 (MDGETAEEQGGPVPPPVAPGGPGLGGAPGGRREP) is disordered. Residues 20–29 (GGPGLGGAPG) are compositionally biased toward gly residues. Residues 44 to 304 (QLSKQVLGLG…ITQFMNHPWI (261 aa)) enclose the Protein kinase domain. Residues 50 to 58 (LGLGVNGKV) and Lys73 contribute to the ATP site. Asp166 (proton acceptor) is an active-site residue. Thr201 is subject to Phosphothreonine; by MAPK14. Ser251 carries the post-translational modification Phosphoserine; by MAPK14. Ser307 bears the Phosphoserine; by autocatalysis mark. The tract at residues 307-343 (SMVVPQTPLHTARVLQEDKDHWDEVKEEMTSALATMR) is autoinhibitory helix. At Thr313 the chain carries Phosphothreonine; by MAPK14. The short motif at 335–344 (MTSALATMRV) is the Nuclear export signal (NES) element. The tract at residues 345 to 369 (DYDQVKIKDLKTSNNRLLNKRRKKQ) is p38 MAPK-binding site. 2 short sequence motifs (bipartite nuclear localization signal) span residues 350–353 (KIKD) and 364–368 (KRRKK). A disordered region spans residues 357-382 (SNNRLLNKRRKKQAGSSSASQGCNNQ). Residues 370–382 (AGSSSASQGCNNQ) are compositionally biased toward polar residues.

It belongs to the protein kinase superfamily. CAMK Ser/Thr protein kinase family. As to quaternary structure, heterodimer with p38-alpha/MAPK14. The heterodimer with p38-alpha/MAPK14 forms a stable complex: molecules are positioned 'face to face' so that the ATP-binding sites of both kinases are at the heterodimer interface. Interacts with TCF3 and with polycomb proteins, such as PCH2 and BMI1/PCGF4. Post-translationally, phosphorylated and activated by MAPK1/ERK2 and MAPK3/ERK1. Phosphorylated and activated by MAP kinase p38-alpha/MAPK14 at Thr-201, Ser-251 and Thr-313. Widely expressed, with a higher expression level observed in heart and skeletal muscle. No expression in brain. Expressed in the retinal pigment epithelium.

The protein localises to the nucleus. It localises to the cytoplasm. The enzyme catalyses L-seryl-[protein] + ATP = O-phospho-L-seryl-[protein] + ADP + H(+). The catalysed reaction is L-threonyl-[protein] + ATP = O-phospho-L-threonyl-[protein] + ADP + H(+). Activated following phosphorylation by p38-alpha/MAPK14 following various stresses. Inhibited by ligand 5B (2'-[2-(1,3-benzodioxol-5-yl)pyrimidin-4-yl]-5',6'-dihydrospiro[piperidine-4,7'-pyrrolo[3,2-c]pyridin]- 4'(1'h)-one) and ligand P4O (2-[2-(2-fluorophenyl)pyridin-4-yl]-1,5,6,7-tetrahydro- 4h-pyrrolo[3,2-c]pyridin-4-one), 2 ATP-competitive inhibitors. In terms of biological role, stress-activated serine/threonine-protein kinase involved in cytokines production, endocytosis, cell migration, chromatin remodeling and transcriptional regulation. Following stress, it is phosphorylated and activated by MAP kinase p38-alpha/MAPK14, leading to phosphorylation of substrates. Phosphorylates serine in the peptide sequence, Hyd-X-R-X(2)-S, where Hyd is a large hydrophobic residue. MAPKAPK2 and MAPKAPK3, share the same function and substrate specificity, but MAPKAPK3 kinase activity and level in protein expression are lower compared to MAPKAPK2. Phosphorylates HSP27/HSPB1, KRT18, KRT20, RCSD1, RPS6KA3, TAB3 and TTP/ZFP36. Mediates phosphorylation of HSP27/HSPB1 in response to stress, leading to dissociate HSP27/HSPB1 from large small heat-shock protein (sHsps) oligomers and impair their chaperone activities and ability to protect against oxidative stress effectively. Involved in inflammatory response by regulating tumor necrosis factor (TNF) and IL6 production post-transcriptionally: acts by phosphorylating AU-rich elements (AREs)-binding proteins, such as TTP/ZFP36, leading to regulate the stability and translation of TNF and IL6 mRNAs. Phosphorylation of TTP/ZFP36, a major post-transcriptional regulator of TNF, promotes its binding to 14-3-3 proteins and reduces its ARE mRNA affinity leading to inhibition of dependent degradation of ARE-containing transcript. Involved in toll-like receptor signaling pathway (TLR) in dendritic cells: required for acute TLR-induced macropinocytosis by phosphorylating and activating RPS6KA3. Also acts as a modulator of Polycomb-mediated repression. The polypeptide is MAP kinase-activated protein kinase 3 (MAPKAPK3) (Homo sapiens (Human)).